A 378-amino-acid chain; its full sequence is Pseudouridine kinase (378 aa).

Pseudouridine-binding positions include D12, T26, 37–41, V38, N137, and K166; that span reads GVARN. Mg(2+) contacts are provided by S181 and T237. ATP contacts are provided by T237, G239, G242, T298, L306, and G310. D311 provides a ligand contact to pseudouridine.

The protein belongs to the carbohydrate kinase PfkB family. Forms homodimers.

The protein resides in the peroxisome. The catalysed reaction is pseudouridine + ATP = psi-UMP + ADP + H(+). Functionally, catalyzes the phosphorylation of pseudouridine to pseudouridine 5'-phosphate (PsiMP). Catalyzes the first step in a pseudouridine degradation pathway. Acts together with the pseudouridine 5'-phosphate glycosidase PUMY in the peroxisome to prevent toxic pseudouridine monophosphate accumulation. The sequence is that of Pseudouridine kinase from Arabidopsis thaliana (Mouse-ear cress).